The sequence spans 119 residues: Beta-2-microglobulin (119 aa).

An N-terminal signal peptide occupies residues 1 to 20 (MARFVVVALLVLLSLSGLEA). An Ig-like C1-type domain is found at 25–114 (PKIQVYSRHP…VTFSTPKTVK (90 aa)). Cysteine 45 and cysteine 100 are joined by a disulfide.

It belongs to the beta-2-microglobulin family. In terms of assembly, heterodimer of an alpha chain and a beta chain. Beta-2-microglobulin is the beta-chain of major histocompatibility complex class I molecules.

It is found in the secreted. Functionally, component of the class I major histocompatibility complex (MHC). Involved in the presentation of peptide antigens to the immune system. The sequence is that of Beta-2-microglobulin (B2M) from Callimico goeldii (Goeldi's marmoset).